A 248-amino-acid chain; its full sequence is ATP synthase subunit a, chloroplastic (248 aa).

The next 5 membrane-spanning stretches (helical) occupy residues Gly35–Gly55, Ile94–Ile114, Ile133–Ser153, Val202–Ala222, and Ser224–Gly244.

Belongs to the ATPase A chain family. In terms of assembly, F-type ATPases have 2 components, CF(1) - the catalytic core - and CF(0) - the membrane proton channel. CF(1) has five subunits: alpha(3), beta(3), gamma(1), delta(1), epsilon(1). CF(0) has four main subunits: a, b, b' and c.

The protein resides in the plastid. It is found in the chloroplast thylakoid membrane. In terms of biological role, key component of the proton channel; it plays a direct role in the translocation of protons across the membrane. The chain is ATP synthase subunit a, chloroplastic from Antithamnion sp. (Red alga).